Here is a 153-residue protein sequence, read N- to C-terminus: Transcriptional repressor NrdR 2 (153 aa).

A zinc finger spans residues 3–34 (CPFCGQDDTQVKDSRPTDDNAAIRRRRACPGC). Residues 49–139 (LVVVKKDGSR…VYRNFREAKD (91 aa)) form the ATP-cone domain.

It belongs to the NrdR family. Requires Zn(2+) as cofactor.

In terms of biological role, negatively regulates transcription of bacterial ribonucleotide reductase nrd genes and operons by binding to NrdR-boxes. The polypeptide is Transcriptional repressor NrdR 2 (Paramagnetospirillum magneticum (strain ATCC 700264 / AMB-1) (Magnetospirillum magneticum)).